Consider the following 579-residue polypeptide: Adenine deaminase (579 aa).

This sequence belongs to the metallo-dependent hydrolases superfamily. Adenine deaminase family. Requires Mn(2+) as cofactor.

The catalysed reaction is adenine + H2O + H(+) = hypoxanthine + NH4(+). This Listeria monocytogenes serotype 4b (strain F2365) protein is Adenine deaminase.